A 224-amino-acid polypeptide reads, in one-letter code: Ribonuclease T (224 aa).

The Exonuclease domain maps to V20–F194. Residues D23, E25, H181, and D186 each contribute to the Mg(2+) site. H181 acts as the Proton donor/acceptor in catalysis.

It belongs to the RNase T family. As to quaternary structure, homodimer. Requires Mg(2+) as cofactor.

Trims short 3' overhangs of a variety of RNA species, leaving a one or two nucleotide 3' overhang. Responsible for the end-turnover of tRNA: specifically removes the terminal AMP residue from uncharged tRNA (tRNA-C-C-A). Also appears to be involved in tRNA biosynthesis. This chain is Ribonuclease T, found in Shewanella putrefaciens (strain CN-32 / ATCC BAA-453).